We begin with the raw amino-acid sequence, 552 residues long: Serine palmitoyltransferase 3 (552 aa).

Residues 1–29 (MANPGGGAVCNGKLHNHKKQSNGSQSRNC) form a disordered region. Residues 59-79 (PLHVMVFTYMGYGIGTLFGYL) traverse the membrane as a helical segment. An N6-(pyridoxal phosphate)lysine modification is found at K371.

Belongs to the class-II pyridoxal-phosphate-dependent aminotransferase family. In terms of assembly, component of the serine palmitoyltransferase (SPT) complex, which is composed of SPTLC1, SPTLC2 or SPTLC3 and SPTSSA or SPTSSB. The heterodimer consisting of SPTLC1 and SPTLC2/SPTLC3 forms the catalytic core of the enzyme, while SPTSSA or SPTSSB subunits determine substrate specificity. SPT also interacts with ORMDL proteins, especially ORMDL3, which negatively regulate SPT activity in the presence of ceramides. Requires pyridoxal 5'-phosphate as cofactor. In terms of tissue distribution, expressed in most tissues, except peripheral blood cells and bone marrow, with highest levels in heart, kidney, liver, uterus and skin.

The protein resides in the endoplasmic reticulum membrane. The catalysed reaction is L-serine + hexadecanoyl-CoA + H(+) = 3-oxosphinganine + CO2 + CoA. It carries out the reaction dodecanoyl-CoA + L-serine + H(+) = 3-oxotetradecasphinganine + CO2 + CoA. The enzyme catalyses tetradecanoyl-CoA + L-serine + H(+) = 3-oxohexadecasphinganine + CO2 + CoA. It catalyses the reaction octadecanoyl-CoA + L-serine + H(+) = 3-oxoeicosasphinganine + CO2 + CoA. Its pathway is lipid metabolism; sphingolipid metabolism. SPT complex catalytic activity is negatively regulated by ORMDL proteins, including ORMDL3, in the presence of ceramides. This mechanism allows to maintain ceramide levels at sufficient concentrations for the production of complex sphingolipids, but which prevents the accumulation of ceramides to levels that trigger apoptosis. Its function is as follows. Component of the serine palmitoyltransferase multisubunit enzyme (SPT) that catalyzes the initial and rate-limiting step in sphingolipid biosynthesis by condensing L-serine and activated acyl-CoA (most commonly palmitoyl-CoA) to form long-chain bases. The SPT complex is composed of SPTLC1, SPTLC2 or SPTLC3 and SPTSSA or SPTSSB. Within this complex, the heterodimer consisting of SPTLC1 and SPTLC2/SPTLC3 forms the catalytic core. The composition of the serine palmitoyltransferase (SPT) complex determines the substrate preference. The SPTLC1-SPTLC2-SPTSSA complex shows a strong preference for C16-CoA substrate, while the SPTLC1-SPTLC3-SPTSSA isozyme uses both C14-CoA and C16-CoA as substrates, with a slight preference for C14-CoA. The SPTLC1-SPTLC2-SPTSSB complex shows a strong preference for C18-CoA substrate, while the SPTLC1-SPTLC3-SPTSSB isozyme displays an ability to use a broader range of acyl-CoAs, without apparent preference. The polypeptide is Serine palmitoyltransferase 3 (Homo sapiens (Human)).